The chain runs to 48 residues: Phospholipase A2 TI-Nh (48 aa).

His25 is a catalytic residue. Ca(2+) is bound at residue Asp26.

The protein belongs to the phospholipase A2 family. Group I subfamily. D49 sub-subfamily. Monomer. Ca(2+) serves as cofactor. As to expression, expressed by the venom gland.

The protein resides in the secreted. The enzyme catalyses a 1,2-diacyl-sn-glycero-3-phosphocholine + H2O = a 1-acyl-sn-glycero-3-phosphocholine + a fatty acid + H(+). Functionally, phospholipase A2 with weak enzymatic activity, which partially inhibits thrombin enzymatic activity (Ki=73 nM), completely inhibits thrombin-induced platelet aggregation and retards fibrin clot formation (IC(50)=0.2 nM). May exert this anticoagulant effect through a non-enzymatic mechanism. The chain is Phospholipase A2 TI-Nh from Naja haje haje (Egyptian cobra).